We begin with the raw amino-acid sequence, 128 residues long: Protein BEX1 (128 aa).

The segment at 1-55 is disordered; it reads MESKDQGAKNLNMENDHQKKEEKEEKPQDTIKREPVVAPTFEAGKNCAPRGGRRR. Basic and acidic residues predominate over residues 14–35; sequence ENDHQKKEEKEEKPQDTIKREP. Ser105 bears the Phosphoserine; by PKB/AKT1 mark. A disordered region spans residues 107 to 128; it reads SLRAVSTDPPHHDHHDEFCLMP. The span at 115–128 shows a compositional bias: basic and acidic residues; sequence PPHHDHHDEFCLMP. The interval 117–121 is his cluster; that stretch reads HHDHH. Zn(2+) is bound at residue Cys125.

It belongs to the BEX family. As to quaternary structure, interacts with neurotrophin receptor p75NTR/NGFR. Interacts with OMP. Post-translationally, phosphorylated. Phosphorylation of Ser-105 protects it from the proteasome. Ubiquitinated. Degraded by the proteasome. In terms of tissue distribution, expressed in the central nervous system. Expressed in Schwann cells from newborn sciatic nerve.

It is found in the nucleus. The protein localises to the cytoplasm. Functionally, signaling adapter molecule involved in p75NTR/NGFR signaling. Plays a role in cell cycle progression and neuronal differentiation. Inhibits neuronal differentiation in response to nerve growth factor (NGF). May act as a link between the cell cycle and neurotrophic factor signaling, possibly by functioning as an upstream modulator of receptor signaling, coordinating biological responses to external signals with internal cellular states. In absence of reductive stress, acts as a pseudosubstrate for the CRL2(FEM1B) complex: associates with FEM1B via zinc, thereby preventing association between FEM1B and its substrates. This chain is Protein BEX1 (Bex1), found in Rattus norvegicus (Rat).